The following is a 504-amino-acid chain: Hydroxyisobutyraldehyde dehydrogenase (504 aa).

The active-site Proton acceptor is Glu-260. The Nucleophile role is filled by Cys-294.

Belongs to the aldehyde dehydrogenase family.

It localises to the cytoplasm. It carries out the reaction 2-hydroxy-2-methylpropanal + NAD(+) + H2O = 2-hydroxy-2-methylpropanoate + NADH + 2 H(+). In terms of biological role, involved in the degradation of methyl tert-butyl ether (MTBE). Catalyzes the conversion of hydroxyisobutyraldehyde to hydroxyisobutyric acid (HIBA). The sequence is that of Hydroxyisobutyraldehyde dehydrogenase from Mycolicibacterium austroafricanum (Mycobacterium austroafricanum).